The sequence spans 414 residues: Enolase (414 aa).

Position 162 (Gln162) interacts with (2R)-2-phosphoglycerate. Glu204 serves as the catalytic Proton donor. Residues Asp239, Glu280, and Asp307 each coordinate Mg(2+). (2R)-2-phosphoglycerate contacts are provided by Lys332, Arg361, Ser362, and Lys383. Lys332 functions as the Proton acceptor in the catalytic mechanism.

This sequence belongs to the enolase family. The cofactor is Mg(2+).

The protein resides in the cytoplasm. It localises to the secreted. Its subcellular location is the cell surface. The catalysed reaction is (2R)-2-phosphoglycerate = phosphoenolpyruvate + H2O. It participates in carbohydrate degradation; glycolysis; pyruvate from D-glyceraldehyde 3-phosphate: step 4/5. In terms of biological role, catalyzes the reversible conversion of 2-phosphoglycerate (2-PG) into phosphoenolpyruvate (PEP). It is essential for the degradation of carbohydrates via glycolysis. This Campylobacter lari (strain RM2100 / D67 / ATCC BAA-1060) protein is Enolase.